The chain runs to 329 residues: Small ribosomal subunit protein RACK1 (329 aa).

WD repeat units lie at residues Gly19–Pro59, Gly68–Leu107, Gly110–Leu149, Ala154–Thr193, Asp196–Lys235, Glu237–Glu275, and Pro295–Ser328.

The protein belongs to the WD repeat G protein beta family. Ribosomal protein RACK1 subfamily.

The polypeptide is Small ribosomal subunit protein RACK1 (gpbB) (Dictyostelium discoideum (Social amoeba)).